A 283-amino-acid polypeptide reads, in one-letter code: CUE domain-containing protein 2 (283 aa).

A compositionally biased stretch (polar residues) spans 87–109 (LSGARNKENVQPQSSEVQGQVSI). The disordered stretch occupies residues 87–139 (LSGARNKENVQPQSSEVQGQVSISPEPLQRPEKLKEETMSSAGDTQDEAAGPE). Ser-110 bears the Phosphoserine mark. The segment covering 115 to 124 (QRPEKLKEET) has biased composition (basic and acidic residues). The 44-residue stretch at 141–184 (ELLPGVDVLLEVFPTCSVEQAQWVLAKARGDLEEAVQMLVEGKQ) folds into the CUE domain.

Belongs to the CUEDC2 family. In terms of assembly, interacts with PGR and ESR1.

It is found in the cytoplasm. Its subcellular location is the nucleus. In terms of biological role, controls PGR and ESR1 protein levels through their targeting for ubiquitination and subsequent proteasomal degradation. This is CUE domain-containing protein 2 (CUEDC2) from Bos taurus (Bovine).